A 121-amino-acid polypeptide reads, in one-letter code: Small ribosomal subunit protein uS13 (121 aa).

The interval 88-121 (GMRHRRGLPTRGQNTKNNARTRKGPAKSIAGKKK) is disordered. Basic residues predominate over residues 106–121 (ARTRKGPAKSIAGKKK).

This sequence belongs to the universal ribosomal protein uS13 family. In terms of assembly, part of the 30S ribosomal subunit. Forms a loose heterodimer with protein S19. Forms two bridges to the 50S subunit in the 70S ribosome.

Located at the top of the head of the 30S subunit, it contacts several helices of the 16S rRNA. In the 70S ribosome it contacts the 23S rRNA (bridge B1a) and protein L5 of the 50S subunit (bridge B1b), connecting the 2 subunits; these bridges are implicated in subunit movement. Contacts the tRNAs in the A and P-sites. This chain is Small ribosomal subunit protein uS13, found in Lactococcus lactis subsp. cremoris (strain MG1363).